The sequence spans 120 residues: UPF0344 protein LMHCC_0278 (120 aa).

The next 4 helical transmembrane spans lie at 3 to 23 (GYIHLISWVAIVVLTVTALLI), 33 to 53 (MLQMINRVFYILVILSGIMMV), 62 to 82 (ILAIFKILMGIIVIGVVEMLL), and 92 to 112 (GMFLMIFVIVVVITISLGFYL).

The protein belongs to the UPF0344 family.

It is found in the cell membrane. This chain is UPF0344 protein LMHCC_0278, found in Listeria monocytogenes serotype 4a (strain HCC23).